An 89-amino-acid chain; its full sequence is Signal recognition particle 19 kDa protein (89 aa).

Belongs to the SRP19 family. In terms of assembly, part of the signal recognition particle protein translocation system, which is composed of SRP and FtsY. Archaeal SRP consists of a 7S RNA molecule of 300 nucleotides and two protein subunits: SRP54 and SRP19.

It is found in the cytoplasm. Its function is as follows. Involved in targeting and insertion of nascent membrane proteins into the cytoplasmic membrane. Binds directly to 7S RNA and mediates binding of the 54 kDa subunit of the SRP. This is Signal recognition particle 19 kDa protein from Methanococcus maripaludis (strain C5 / ATCC BAA-1333).